A 113-amino-acid polypeptide reads, in one-letter code: uncharacterized protein (113 aa).

The HTH cro/C1-type domain maps to Leu16–Trp70. Residues Ile27–Asn46 constitute a DNA-binding region (H-T-H motif).

It belongs to the VapA/VapI family.

This is an uncharacterized protein from Escherichia coli O6:H1 (strain CFT073 / ATCC 700928 / UPEC).